Consider the following 175-residue polypeptide: Large ribosomal subunit protein uL10 (175 aa).

This sequence belongs to the universal ribosomal protein uL10 family. Part of the ribosomal stalk of the 50S ribosomal subunit. The N-terminus interacts with L11 and the large rRNA to form the base of the stalk. The C-terminus forms an elongated spine to which L12 dimers bind in a sequential fashion forming a multimeric L10(L12)X complex.

In terms of biological role, forms part of the ribosomal stalk, playing a central role in the interaction of the ribosome with GTP-bound translation factors. This chain is Large ribosomal subunit protein uL10, found in Prochlorococcus marinus (strain AS9601).